Reading from the N-terminus, the 205-residue chain is Recombination protein RecR (205 aa).

A C4-type zinc finger spans residues 58–73; that stretch reads CKKCHTISDHELCAIC. The Toprim domain maps to 81–177; sequence RVVCIVEDIR…KISTIARGIP (97 aa).

This sequence belongs to the RecR family.

Functionally, may play a role in DNA repair. It seems to be involved in an RecBC-independent recombinational process of DNA repair. It may act with RecF and RecO. The polypeptide is Recombination protein RecR (Cytophaga hutchinsonii (strain ATCC 33406 / DSM 1761 / CIP 103989 / NBRC 15051 / NCIMB 9469 / D465)).